The chain runs to 105 residues: Protein FAM24A (105 aa).

The N-terminal stretch at 1 to 32 is a signal peptide; it reads MAKMFDLRTKIMIGIGSSLLVAAMVLLSVVFC.

This sequence belongs to the FAM24 family.

It is found in the secreted. This Homo sapiens (Human) protein is Protein FAM24A (FAM24A).